A 361-amino-acid chain; its full sequence is Molybdopterin synthase catalytic subunit (361 aa).

Residues His101 to Arg102, Lys117, and Lys124 to Glu126 each bind substrate.

Belongs to the MoaE family. MOCS2B subfamily. Heterotetramer; composed of 2 small (Mocs2A) and 2 large (Mocs2B) subunits.

It localises to the cytoplasm. It carries out the reaction 2 [molybdopterin-synthase sulfur-carrier protein]-C-terminal-Gly-aminoethanethioate + cyclic pyranopterin phosphate + H2O = molybdopterin + 2 [molybdopterin-synthase sulfur-carrier protein]-C-terminal Gly-Gly + 2 H(+). Its pathway is cofactor biosynthesis; molybdopterin biosynthesis. Its function is as follows. Catalytic subunit of the molybdopterin synthase complex, a complex that catalyzes the conversion of precursor Z into molybdopterin. Acts by mediating the incorporation of 2 sulfur atoms from thiocarboxylated Mocs2A into precursor Z to generate a dithiolene group. The chain is Molybdopterin synthase catalytic subunit from Drosophila persimilis (Fruit fly).